A 712-amino-acid polypeptide reads, in one-letter code: Sterol uptake control protein 2 (712 aa).

Residues 1–19 are compositionally biased toward polar residues; it reads MMMTVKQESPNSTLNTSEF. The disordered stretch occupies residues 1-52; the sequence is MMMTVKQESPNSTLNTSEFSSDENLKTNNSEPPKKVSKSSTGKRKYHQKSRN. Over residues 35–50 the composition is skewed to basic residues; that stretch reads KVSKSSTGKRKYHQKS. The segment at residues 54–81 is a DNA-binding region (zn(2)-C6 fungal-type); it reads CSTCKKRRVKCDEQRPVCGNCTKLKLDC. 2 disordered regions span residues 95–150 and 236–342; these read KKDI…VIPP and TTVP…ANPL. Polar residues-rich tracts occupy residues 113–143, 252–306, and 326–337; these read STVSAASDSESTTQQATPSLTPSPNHSQDIK, RKSQ…SGSP, and KSLPNISPNMSI.

It is found in the nucleus. Functionally, transcription factor involved in the regulation of ergosterol biosynthetic genes such as ERG2 and ERG11 through direct binding to sterol response elements (SREs) in the promoters. Also binds to its own promoter on 2 cis-acting elements to promote autoregulation. Regulates sterol uptake across the plasma membrane. Acts as a major regulator of ascorbic acid-induced response. Plays a role in the triggering of pyroptosis, an inflammasome-mediated programmed cell death pathway in macrophages, allowing macrophages escaping. This is Sterol uptake control protein 2 from Candida albicans (strain SC5314 / ATCC MYA-2876) (Yeast).